The chain runs to 431 residues: tRNA-specific 2-thiouridylase MnmA (431 aa).

Residues 35–42 and L61 each bind ATP; that span reads AMSGGVDS. C129 acts as the Nucleophile in catalysis. An intrachain disulfide couples C129 to C226. G153 lines the ATP pocket. Positions 176–178 are interaction with tRNA; sequence RDQ. Residue C226 is the Cysteine persulfide intermediate of the active site. The segment at 407 to 431 is disordered; the sequence is PKPPNEDLLDTNESSDLVSPKRSAC.

The protein belongs to the MnmA/TRMU family.

It is found in the cytoplasm. It carries out the reaction S-sulfanyl-L-cysteinyl-[protein] + uridine(34) in tRNA + AH2 + ATP = 2-thiouridine(34) in tRNA + L-cysteinyl-[protein] + A + AMP + diphosphate + H(+). Its function is as follows. Catalyzes the 2-thiolation of uridine at the wobble position (U34) of tRNA, leading to the formation of s(2)U34. This chain is tRNA-specific 2-thiouridylase MnmA, found in Beijerinckia indica subsp. indica (strain ATCC 9039 / DSM 1715 / NCIMB 8712).